The primary structure comprises 173 residues: uncharacterized protein (173 aa).

Positions Met1–Gly15 are cleaved as a propeptide — leader sequence. Phe16 carries the post-translational modification N-methylphenylalanine. Residues Phe16–Ile37 traverse the membrane as a helical segment.

Its subcellular location is the membrane. This is an uncharacterized protein from Aquifex aeolicus (strain VF5).